A 533-amino-acid polypeptide reads, in one-letter code: Tryptophan 7-halogenase KtzQ (533 aa).

The FAD site is built by Gly14, Thr16, Ala17, Ala40, Glu50, and Ala51. The active site involves Lys80. Glu359 provides a ligand contact to L-tryptophan. Chloride-binding residues include Thr361 and Gly362. Leu363 lines the FAD pocket. L-tryptophan is bound by residues Tyr456, Tyr457, Glu463, and Phe467.

The protein belongs to the flavin-dependent halogenase family. Bacterial tryptophan halogenase subfamily.

It catalyses the reaction L-tryptophan + FADH2 + chloride + O2 = 7-chloro-L-tryptophan + FAD + 2 H2O. Its function is as follows. Involved in the biosynthesis of kutznerides, actinomycete-derived antifungal and antimicrobial cyclic hexadepsipeptides. Together with KtzR, catalyzes the regiospecific dichlorination of L-tryptophan (L-Trp) to produce 6,7-dichloro-L-tryptophan. KtzQ catalyzes the chlorination of L-Trp at C7 position to yield 7-chlorotryptophan. Can also use 6-chloro-L-tryptophan as substrate and form 6,7-dichloro-L-tryptophan, but has a preference for halogenation at the 7 position of unmodified L-Trp. Cannot use piperazic acid or gamma,delta-dehydropiperazic acid. The chain is Tryptophan 7-halogenase KtzQ from Kutzneria sp. (strain 744).